The chain runs to 1059 residues: Putative ATP-dependent RNA helicase BoYb (1059 aa).

The short motif at 54–82 is the Q motif element; the sequence is RRFAEVSLLPDILETMRNLGLNRLLRLQS. Positions 87 to 284 constitute a Helicase ATP-binding domain; that stretch reads HLAGGSGHGA…RAVNDKPALV (198 aa). Residue 100–107 participates in ATP binding; it reads GSPASGRT. A DEAD box motif is present at residues 230 to 233; the sequence is DDVD. Residues 575–639 enclose the Tudor domain; the sequence is PPVAGAICMY…GKLFECPEAL (65 aa). The segment at 756 to 787 is disordered; the sequence is VQDSKEKANSKPHEKMKGKMTDQPAKLQSQPP. Residues 757 to 775 show a composition bias toward basic and acidic residues; sequence QDSKEKANSKPHEKMKGKM.

Its subcellular location is the cytoplasm. It catalyses the reaction ATP + H2O = ADP + phosphate + H(+). Involved in primary piRNA biogenesis in germline cells. This chain is Putative ATP-dependent RNA helicase BoYb (BoYb), found in Drosophila melanogaster (Fruit fly).